The primary structure comprises 34 residues: Photosystem II reaction center protein M (34 aa).

A helical membrane pass occupies residues 5–25 (ILGLMAVALFILIPTSFLLIL).

This sequence belongs to the PsbM family. In terms of assembly, PSII is composed of 1 copy each of membrane proteins PsbA, PsbB, PsbC, PsbD, PsbE, PsbF, PsbH, PsbI, PsbJ, PsbK, PsbL, PsbM, PsbT, PsbX, PsbY, PsbZ, Psb30/Ycf12, at least 3 peripheral proteins of the oxygen-evolving complex and a large number of cofactors. It forms dimeric complexes.

The protein localises to the plastid. It is found in the chloroplast thylakoid membrane. One of the components of the core complex of photosystem II (PSII). PSII is a light-driven water:plastoquinone oxidoreductase that uses light energy to abstract electrons from H(2)O, generating O(2) and a proton gradient subsequently used for ATP formation. It consists of a core antenna complex that captures photons, and an electron transfer chain that converts photonic excitation into a charge separation. This subunit is found at the monomer-monomer interface. This Tupiella akineta (Green alga) protein is Photosystem II reaction center protein M.